The primary structure comprises 160 residues: Transcription elongation factor GreA (160 aa).

The stretch at 49-75 forms a coiled coil; the sequence is SEYDEAKNDQAFTEGKILQLENKLKNA.

It belongs to the GreA/GreB family.

Functionally, necessary for efficient RNA polymerase transcription elongation past template-encoded arresting sites. The arresting sites in DNA have the property of trapping a certain fraction of elongating RNA polymerases that pass through, resulting in locked ternary complexes. Cleavage of the nascent transcript by cleavage factors such as GreA or GreB allows the resumption of elongation from the new 3'terminus. GreA releases sequences of 2 to 3 nucleotides. This is Transcription elongation factor GreA from Clostridium botulinum (strain Eklund 17B / Type B).